We begin with the raw amino-acid sequence, 106 residues long: Putative double-stranded DNA mimic protein PM0536 (106 aa).

This sequence belongs to the putative dsDNA mimic protein family.

May act as a double-stranded DNA (dsDNA) mimic. Probably regulates the activity of a dsDNA-binding protein. The protein is Putative double-stranded DNA mimic protein PM0536 of Pasteurella multocida (strain Pm70).